The sequence spans 122 residues: NADH-quinone oxidoreductase subunit A (122 aa).

3 consecutive transmembrane segments (helical) span residues 12–32 (ILLFILVGLAIGVLSMLAGWL), 67–87 (IAILFILFDLEIAFLFPWAVV), and 91–111 (IGWFGFVAMLVFLGLLVVGFI).

It belongs to the complex I subunit 3 family. NDH-1 is composed of 14 different subunits. Subunits NuoA, H, J, K, L, M, N constitute the membrane sector of the complex.

It is found in the cell inner membrane. The enzyme catalyses a quinone + NADH + 5 H(+)(in) = a quinol + NAD(+) + 4 H(+)(out). Its function is as follows. NDH-1 shuttles electrons from NADH, via FMN and iron-sulfur (Fe-S) centers, to quinones in the respiratory chain. The immediate electron acceptor for the enzyme in this species is believed to be ubiquinone. Couples the redox reaction to proton translocation (for every two electrons transferred, four hydrogen ions are translocated across the cytoplasmic membrane), and thus conserves the redox energy in a proton gradient. The polypeptide is NADH-quinone oxidoreductase subunit A (Nitrosomonas europaea (strain ATCC 19718 / CIP 103999 / KCTC 2705 / NBRC 14298)).